The sequence spans 364 residues: MSIINKAAAIGGGVIGAGWVARLLLNGIDVSIFDPDPEASRKVSEVMKGARRAYKQMVPGGLPKEGKLTFAKTIAEAVADADFIQESVPERLDLKHRVLAEIDAHAPANAIVGSSTSGIKPTDMQVAMKKHPERLVVGHPFNPVYLLPLVEIVGGDQTFPEAIEVAKEIYASIGMKPVVIRKEIEAFVGDRLLEAAWREALWLIKDGICTVEELDDIMRYGFGLRWAQMGMFQVYRVAGGEAGMRHFMAQFGPCLKWPWTKLMDVPEFNDELVDLIATQSDDQAHGLSIRELEKIRDDNLVAIMDALSKQNKGKGWGAGALHKDYTKQLAKLAAKKPAASTAAEKAKASKPVKKAEKPKKKKKG.

Residue 11 to 16 (GGGVIG) participates in NAD(+) binding. The disordered stretch occupies residues 336–364 (KPAASTAAEKAKASKPVKKAEKPKKKKKG). Basic residues predominate over residues 348-364 (ASKPVKKAEKPKKKKKG).

It belongs to the 3-hydroxyacyl-CoA dehydrogenase family. L-carnitine dehydrogenase subfamily. As to quaternary structure, homodimer.

The protein localises to the cytoplasm. It catalyses the reaction carnitine + NAD(+) = 3-dehydrocarnitine + NADH + H(+). It functions in the pathway amine and polyamine metabolism; carnitine metabolism. Its function is as follows. Catalyzes the NAD(+)-dependent oxidation of L-carnitine to 3-dehydrocarnitine. This chain is L-carnitine dehydrogenase, found in Mesorhizobium japonicum (strain LMG 29417 / CECT 9101 / MAFF 303099) (Mesorhizobium loti (strain MAFF 303099)).